A 342-amino-acid polypeptide reads, in one-letter code: 4-hydroxy-2-oxovalerate aldolase (342 aa).

The Pyruvate carboxyltransferase domain maps to 7–257 (IWITEVALRD…KTGVDLYKMM (251 aa)). 15–16 (RD) provides a ligand contact to substrate. Asp-16 serves as a coordination point for Mn(2+). His-19 acts as the Proton acceptor in catalysis. 2 residues coordinate substrate: Ser-169 and His-196. His-196 and His-198 together coordinate Mn(2+). Residue Tyr-287 coordinates substrate.

Belongs to the 4-hydroxy-2-oxovalerate aldolase family.

It carries out the reaction (S)-4-hydroxy-2-oxopentanoate = acetaldehyde + pyruvate. The protein is 4-hydroxy-2-oxovalerate aldolase (nbaI) of Geobacillus thermodenitrificans (strain NG80-2).